Reading from the N-terminus, the 325-residue chain is Aldo-keto reductase family 1 member A1 (325 aa).

Ala-2 carries the N-acetylalanine modification. Ser-4 carries the phosphoserine modification. NADP(+)-binding positions include 11–20, Thr-21, and Trp-22; that span reads GQKMPLIGLG. Ser-38 bears the Phosphoserine mark. Asp-45 lines the NADP(+) pocket. Catalysis depends on Tyr-50, which acts as the Proton donor. Lys-127 carries the post-translational modification N6-acetyllysine; alternate. Lys-127 is modified (N6-succinyllysine; alternate). Position 145 is an N6-succinyllysine (Lys-145). Residues Ser-162, Asn-163, Ser-211, Leu-213, Ser-215, Ser-216, Lys-263, Ser-264, Ile-265, Thr-266, Arg-269, Gln-272, and Asn-273 each contribute to the NADP(+) site. Ser-211 is subject to Phosphoserine.

It belongs to the aldo/keto reductase family.

The protein resides in the cytoplasm. It localises to the cytosol. Its subcellular location is the apical cell membrane. The enzyme catalyses a primary alcohol + NADP(+) = an aldehyde + NADPH + H(+). It carries out the reaction L-gulonate + NADP(+) = aldehydo-D-glucuronate + NADPH + H(+). It catalyses the reaction L-gulono-1,4-lactone + NADP(+) = D-glucurono-3,6-lactone + NADPH + H(+). The catalysed reaction is allyl alcohol + NADP(+) = acrolein + NADPH + H(+). The enzyme catalyses glycerol + NADP(+) = D-glyceraldehyde + NADPH + H(+). It carries out the reaction glycerol + NADP(+) = L-glyceraldehyde + NADPH + H(+). It catalyses the reaction hydroxyacetone + NADP(+) = methylglyoxal + NADPH + H(+). The catalysed reaction is 3-deoxyfructose + NADP(+) = 3-deoxyglucosone + NADPH + H(+). The enzyme catalyses (R)-mevalonate + NADP(+) = (R)-mevaldate + NADPH + H(+). It carries out the reaction pyridine 3-methanol + NADP(+) = pyridine-3-carbaldehyde + NADPH + H(+). It catalyses the reaction S-nitroso-CoA + NADPH + H(+) = sulfinamide-CoA + NADP(+). The catalysed reaction is S-nitrosoglutathione + NADPH + H(+) = S-(hydroxysulfenamide)glutathione + NADP(+). Catalyzes the NADPH-dependent reduction of a wide variety of carbonyl-containing compounds to their corresponding alcohols. Displays enzymatic activity towards endogenous metabolites such as aromatic and aliphatic aldehydes, ketones, monosaccharides and bile acids, with a preference for negatively charged substrates, such as glucuronate and succinic semialdehyde. Functions as a detoxifiying enzyme by reducing a range of toxic aldehydes. Reduces methylglyoxal and 3-deoxyglucosone, which are present at elevated levels under hyperglycemic conditions and are cytotoxic. Involved also in the detoxification of lipid-derived aldehydes like acrolein. Plays a role in the activation of procarcinogens, such as polycyclic aromatic hydrocarbon trans-dihydrodiols, and in the metabolism of various xenobiotics and drugs. Also acts as an inhibitor of protein S-nitrosylation by mediating degradation of S-nitroso-coenzyme A (S-nitroso-CoA), a cofactor required to S-nitrosylate proteins. S-nitroso-CoA reductase activity is involved in reprogramming intermediary metabolism in renal proximal tubules, notably by inhibiting protein S-nitrosylation of isoform 2 of PKM (PKM2). Also acts as a S-nitroso-glutathione reductase by catalyzing the NADPH-dependent reduction of S-nitrosoglutathione. Displays no reductase activity towards retinoids. The sequence is that of Aldo-keto reductase family 1 member A1 (AKR1A1) from Pongo abelii (Sumatran orangutan).